The chain runs to 445 residues: C-terminal-binding protein 2 (445 aa).

Residue arginine 22 is modified to Asymmetric dimethylarginine. NAD(+) is bound by residues serine 106, 186-191 (IGFGRT), aspartate 210, 243-249 (CNLNEHN), 270-272 (AAR), and aspartate 296. Residue arginine 272 is part of the active site. Glutamate 301 is an active-site residue. Residue histidine 321 is the Proton donor of the active site. 321-324 (HTAW) provides a ligand contact to NAD(+). A disordered region spans residues 414–445 (THNLPTVAHPSQAPSPNQPTKHGDNREHPNEQ). Serine 428 is subject to Phosphoserine; by HIPK2. The span at 434–445 (KHGDNREHPNEQ) shows a compositional bias: basic and acidic residues.

It belongs to the D-isomer specific 2-hydroxyacid dehydrogenase family. As to quaternary structure, interacts with HIPK2, ZNF217 and PNN. Interacts with the transcription factors BKLF, delta EF1/AREB6/ZEB, EVI-1 and Friend of GATA (FOG) via the consensus motif P-X-[DNS]-L-[STVA]. Can form a complex with BKLF on a CACCC-box oligonucleotide. Can form homodimers or heterodimers of CTBP1 and CTBP2. Interacts with NRIP1 and WIZ. Interacts with PRDM16; represses white adipose tissue (WAT)-specific genes expression. Interacts with MCRIP1. Phosphorylation by HIPK2 on Ser-428 induces proteasomal degradation. In terms of tissue distribution, isoform 2 is specifically localized in synaptic ribbon (at protein level).

It is found in the nucleus. The protein resides in the synapse. Corepressor targeting diverse transcription regulators. Functions in brown adipose tissue (BAT) differentiation. Isoform 2 probably acts as a scaffold for specialized synapses. In Rattus norvegicus (Rat), this protein is C-terminal-binding protein 2 (Ctbp2).